Here is a 123-residue protein sequence, read N- to C-terminus: Small ribosomal subunit protein uS12 (123 aa).

Residues M1 to Q25 form a disordered region. Residues I8–S21 are compositionally biased toward basic residues. D89 is modified (3-methylthioaspartic acid).

The protein belongs to the universal ribosomal protein uS12 family. Part of the 30S ribosomal subunit. Contacts proteins S8 and S17. May interact with IF1 in the 30S initiation complex.

Functionally, with S4 and S5 plays an important role in translational accuracy. Its function is as follows. Interacts with and stabilizes bases of the 16S rRNA that are involved in tRNA selection in the A site and with the mRNA backbone. Located at the interface of the 30S and 50S subunits, it traverses the body of the 30S subunit contacting proteins on the other side and probably holding the rRNA structure together. The combined cluster of proteins S8, S12 and S17 appears to hold together the shoulder and platform of the 30S subunit. This Chlamydia pneumoniae (Chlamydophila pneumoniae) protein is Small ribosomal subunit protein uS12.